Consider the following 527-residue polypeptide: Bifunctional purine biosynthesis protein PurH (527 aa).

An MGS-like domain is found at 1-149; sequence MTADLLPVRR…KNFARVAVAT (149 aa).

Belongs to the PurH family.

It carries out the reaction (6R)-10-formyltetrahydrofolate + 5-amino-1-(5-phospho-beta-D-ribosyl)imidazole-4-carboxamide = 5-formamido-1-(5-phospho-D-ribosyl)imidazole-4-carboxamide + (6S)-5,6,7,8-tetrahydrofolate. The enzyme catalyses IMP + H2O = 5-formamido-1-(5-phospho-D-ribosyl)imidazole-4-carboxamide. It functions in the pathway purine metabolism; IMP biosynthesis via de novo pathway; 5-formamido-1-(5-phospho-D-ribosyl)imidazole-4-carboxamide from 5-amino-1-(5-phospho-D-ribosyl)imidazole-4-carboxamide (10-formyl THF route): step 1/1. Its pathway is purine metabolism; IMP biosynthesis via de novo pathway; IMP from 5-formamido-1-(5-phospho-D-ribosyl)imidazole-4-carboxamide: step 1/1. The protein is Bifunctional purine biosynthesis protein PurH of Stenotrophomonas maltophilia (strain K279a).